The primary structure comprises 435 residues: Adenylosuccinate synthetase (435 aa).

Residues 13-19 and 41-43 each bind GTP; these read GDEGKGK and GHT. The active-site Proton acceptor is the aspartate 14. Mg(2+) contacts are provided by aspartate 14 and glycine 41. Residues 14-17, 39-42, threonine 130, arginine 144, glutamine 225, threonine 240, and arginine 304 contribute to the IMP site; these read DEGK and NAGH. Histidine 42 serves as the catalytic Proton donor. Residue 300–306 coordinates substrate; it reads ATTGRPR. GTP-binding positions include arginine 306, 332–334, and 419–421; these read KLD and STG.

This sequence belongs to the adenylosuccinate synthetase family. In terms of assembly, homodimer. The cofactor is Mg(2+).

The protein localises to the cytoplasm. The catalysed reaction is IMP + L-aspartate + GTP = N(6)-(1,2-dicarboxyethyl)-AMP + GDP + phosphate + 2 H(+). The protein operates within purine metabolism; AMP biosynthesis via de novo pathway; AMP from IMP: step 1/2. In terms of biological role, plays an important role in the de novo pathway of purine nucleotide biosynthesis. Catalyzes the first committed step in the biosynthesis of AMP from IMP. The chain is Adenylosuccinate synthetase from Nitrosospira multiformis (strain ATCC 25196 / NCIMB 11849 / C 71).